The chain runs to 285 residues: RNA polymerase sigma factor RpoH (285 aa).

The tract at residues 53–122 (LILSHLRFVV…IHEYVLRNWR (70 aa)) is sigma-70 factor domain-2. The short motif at 77-80 (DLVQ) is the Interaction with polymerase core subunit RpoC element. Residues 229–280 (ALASLDERSQHIVRSRWLDDDKATLQDLAEMYGVSAERIRQLEKNAMKKLKM) are sigma-70 factor domain-4. The segment at residues 253–272 (LQDLAEMYGVSAERIRQLEK) is a DNA-binding region (H-T-H motif).

This sequence belongs to the sigma-70 factor family. RpoH subfamily. Interacts with the RNA polymerase core enzyme.

It is found in the cytoplasm. Functionally, sigma factors are initiation factors that promote the attachment of RNA polymerase to specific initiation sites and are then released. This sigma factor is involved in regulation of expression of heat shock genes. The protein is RNA polymerase sigma factor RpoH of Vibrio vulnificus (strain CMCP6).